A 1072-amino-acid polypeptide reads, in one-letter code: Carbamoyl phosphate synthase large chain (1072 aa).

The tract at residues 1 to 401 is carboxyphosphate synthetic domain; sequence MPKRLDINTI…SLLKAVRSLE (401 aa). ATP-binding residues include Arg-129, Arg-169, Gly-175, Gly-176, Lys-208, Ile-210, Glu-215, Gly-241, Val-242, His-243, Gln-284, and Glu-298. One can recognise an ATP-grasp 1 domain in the interval 133–327; it reads RTLMQELNEP…IAKLAAKIAV (195 aa). 3 residues coordinate Mg(2+): Gln-284, Glu-298, and Asn-300. Residues Gln-284, Glu-298, and Asn-300 each contribute to the Mn(2+) site. The segment at 402–546 is oligomerization domain; that stretch reads LGIYHLELDH…YSTYADENES (145 aa). The tract at residues 547–929 is carbamoyl phosphate synthetic domain; that stretch reads IVTDRKSVVV…ALYKGLVASG (383 aa). In terms of domain architecture, ATP-grasp 2 spans 671–861; the sequence is EAALTKLGIP…MANVATKVIL (191 aa). ATP contacts are provided by Arg-707, Arg-746, Glu-752, Gly-777, Val-778, His-779, Ser-780, Gln-820, and Glu-832. Residues Gln-820, Glu-832, and Asn-834 each coordinate Mg(2+). Residues Gln-820, Glu-832, and Asn-834 each contribute to the Mn(2+) site. One can recognise an MGS-like domain in the interval 930–1072; the sequence is INIPTHGSVI…QTKRHEVVHA (143 aa). The allosteric domain stretch occupies residues 930 to 1072; sequence INIPTHGSVI…QTKRHEVVHA (143 aa).

The protein belongs to the CarB family. As to quaternary structure, composed of two chains; the small (or glutamine) chain promotes the hydrolysis of glutamine to ammonia, which is used by the large (or ammonia) chain to synthesize carbamoyl phosphate. Tetramer of heterodimers (alpha,beta)4. Mg(2+) serves as cofactor. Requires Mn(2+) as cofactor.

It carries out the reaction hydrogencarbonate + L-glutamine + 2 ATP + H2O = carbamoyl phosphate + L-glutamate + 2 ADP + phosphate + 2 H(+). The catalysed reaction is hydrogencarbonate + NH4(+) + 2 ATP = carbamoyl phosphate + 2 ADP + phosphate + 2 H(+). It participates in amino-acid biosynthesis; L-arginine biosynthesis; carbamoyl phosphate from bicarbonate: step 1/1. Its pathway is pyrimidine metabolism; UMP biosynthesis via de novo pathway; (S)-dihydroorotate from bicarbonate: step 1/3. Large subunit of the glutamine-dependent carbamoyl phosphate synthetase (CPSase). CPSase catalyzes the formation of carbamoyl phosphate from the ammonia moiety of glutamine, carbonate, and phosphate donated by ATP, constituting the first step of 2 biosynthetic pathways, one leading to arginine and/or urea and the other to pyrimidine nucleotides. The large subunit (synthetase) binds the substrates ammonia (free or transferred from glutamine from the small subunit), hydrogencarbonate and ATP and carries out an ATP-coupled ligase reaction, activating hydrogencarbonate by forming carboxy phosphate which reacts with ammonia to form carbamoyl phosphate. The protein is Carbamoyl phosphate synthase large chain of Bacillus thuringiensis (strain Al Hakam).